A 162-amino-acid polypeptide reads, in one-letter code: Caveolin-2 (162 aa).

Residues M1–K86 lie on the Cytoplasmic side of the membrane. Y19 carries the phosphotyrosine; by SRC modification. 2 positions are modified to phosphoserine: S20 and S23. Y27 carries the post-translational modification Phosphotyrosine; by SRC. S36 carries the phosphoserine modification. An intramembrane region (helical) is located at residues F87–L107. The Cytoplasmic portion of the chain corresponds to S108–D162.

The protein belongs to the caveolin family. Monomer or homodimer. Interacts with CAV1; the interaction forms a stable heterooligomeric complex that is required for targeting to lipid rafts and for caveolae formation. Tyrosine phosphorylated forms do not form heterooligomers with the Tyr-19-phosphorylated form existing as a monomer or dimer, and the Tyr-27-form as a monomer only. Interacts (tyrosine phosphorylated form) with the SH2 domain-containing proteins, RASA1, NCK1 and SRC. Interacts (tyrosine phosphorylated form) with INSR, the interaction (Tyr-27-phosphorylated form) is increased on insulin stimulation. Interacts (Tyr-19 phosphorylated form) with MAPK1 (phosphorylated form); the interaction, promoted by insulin, leads to nuclear location and MAPK1 activation. Interacts with STAT3; the interaction is increased on insulin-induced tyrosine phosphorylation leading to STAT activation. In terms of processing, phosphorylated on serine and tyrosine residues. CAV1 promotes phosphorylation on Ser-23 which then targets the complex to the plasma membrane, lipid rafts and caveolae. Phosphorylation on Ser-36 appears to modulate mitosis in endothelial cells. Phosphorylation on both Tyr-19 and Tyr-27 is required for insulin-induced 'Ser-727' phosphorylation of STAT3 and its activation. Phosphorylation on Tyr-19 is required for insulin-induced phosphorylation of MAPK1 and DNA binding of STAT3. Tyrosine phosphorylation is induced by both EGF and insulin (By. similarity).

The protein resides in the nucleus. It localises to the cytoplasm. The protein localises to the golgi apparatus membrane. Its subcellular location is the cell membrane. It is found in the membrane. The protein resides in the caveola. May act as a scaffolding protein within caveolar membranes. Interacts directly with G-protein alpha subunits and can functionally regulate their activity. Acts as an accessory protein in conjunction with CAV1 in targeting to lipid rafts and driving caveolae formation. The Ser-36 phosphorylated form has a role in modulating mitosis in endothelial cells. Positive regulator of cellular mitogenesis of the MAPK signaling pathway. Required for the insulin-stimulated nuclear translocation and activation of MAPK1 and STAT3, and the subsequent regulation of cell cycle progression. The sequence is that of Caveolin-2 (CAV2) from Otolemur garnettii (Small-eared galago).